Reading from the N-terminus, the 304-residue chain is MKKKIVPINPLKADEILAVSHLSCVFNSKTNNPIKVIDDFSYTFQKNQIYCIIGDSGSGKSTLVNHFNGLIKPNQGDIWVKDIYIGAKQRKIKNFKKLRKTISIVFQFPEYQLFKDTVEKDIMFGPVALGQSKYDARQKAAYYLEMMGLKYPFLERNPFELSGGQKRRVAIAGILAIEPEILIFDEPTAGLDPEGEREMMQLIKTAKQQQRTVFMITHQMENVLEVADVVLVLAKGKLVKAASPYEVFMDQTFLEKTTIVLPPVIQVIKDLIAINAHFNKLIELQPKNLEQLASAINKTIANHG.

The ABC transporter domain occupies 11 to 260 (LKADEILAVS…QTFLEKTTIV (250 aa)). 54 to 61 (GDSGSGKS) contributes to the ATP binding site.

Belongs to the ABC transporter superfamily. Energy-coupling factor EcfA family. In terms of assembly, forms a stable energy-coupling factor (ECF) transporter complex composed of 2 membrane-embedded substrate-binding proteins (S component), 2 ATP-binding proteins (A component) and 2 transmembrane proteins (T component).

The protein resides in the cell membrane. ATP-binding (A) component of a common energy-coupling factor (ECF) ABC-transporter complex. Unlike classic ABC transporters this ECF transporter provides the energy necessary to transport a number of different substrates. The sequence is that of Energy-coupling factor transporter ATP-binding protein EcfA2 from Mycoplasma genitalium (strain ATCC 33530 / DSM 19775 / NCTC 10195 / G37) (Mycoplasmoides genitalium).